The following is a 333-amino-acid chain: Acetyltransferase Pat (333 aa).

3',5'-cyclic AMP contacts are provided by residues 85–88 (GEIA), 95–96 (RT), and Arg-135. The N-acetyltransferase domain occupies 153-317 (FYLRPVLPGD…DTVPFEPELI (165 aa)). Glu-211 serves as a coordination point for Mg(2+). Substrate-binding positions include 237-239 (FTV), 245-250 (GRGIGS), Asn-276, and Arg-285.

Homodimer. The cofactor is Mg(2+).

With respect to regulation, allosterically regulated by cAMP. Functionally, catalyzes specifically the acetylation of the epsilon-amino group of a highly conserved lysine residue in acetyl-CoA synthetase (ACS) and of the universal stress protein (USP) MSMEG_4207. Acetylation results in the inactivation of ACS activity and could be important for mycobacteria to adjust to environmental changes. In Mycolicibacterium smegmatis (strain ATCC 700084 / mc(2)155) (Mycobacterium smegmatis), this protein is Acetyltransferase Pat.